Here is a 397-residue protein sequence, read N- to C-terminus: uncharacterized protein (397 aa).

10 consecutive transmembrane segments (helical) span residues Leu-2 to His-24, Tyr-44 to Leu-66, Ala-92 to Leu-114, Ala-124 to Tyr-143, Ser-150 to Tyr-169, Ala-173 to Leu-195, Phe-255 to Ile-277, Ile-297 to Ser-319, Phe-331 to Ser-350, and Tyr-354 to Val-373.

The protein resides in the cell membrane. This is an uncharacterized protein from Methanocaldococcus jannaschii (strain ATCC 43067 / DSM 2661 / JAL-1 / JCM 10045 / NBRC 100440) (Methanococcus jannaschii).